Reading from the N-terminus, the 364-residue chain is Geranylfarnesyl diphosphate synthase, chloroplastic (364 aa).

The transit peptide at 1–51 (MSHCTIFLYKYFPGKPRYQHCSFLHPLNHKLKSLFLPITGSRFLSNSTFSV) directs the protein to the chloroplast. Positions 72, 111, and 143 each coordinate isopentenyl diphosphate. 2 residues coordinate Mg(2+): aspartate 150 and aspartate 156. Arginine 161 is a dimethylallyl diphosphate binding site. Position 162 (arginine 162) interacts with isopentenyl diphosphate. Residues lysine 249, threonine 250, glutamine 287, aspartate 294, lysine 304, and lysine 314 each coordinate dimethylallyl diphosphate.

It belongs to the FPP/GGPP synthase family. As to quaternary structure, monomer. Mg(2+) is required as a cofactor. As to expression, strongly expressed in glandular trichomes, and, at low levels, in leaves, stems and flowers.

The protein resides in the plastid. It is found in the chloroplast. The catalysed reaction is isopentenyl diphosphate + (2E,6E,10E)-geranylgeranyl diphosphate = (2E,6E,10E,14E)-geranylfarnesyl diphosphate + diphosphate. It catalyses the reaction 2 isopentenyl diphosphate + (2E,6E)-farnesyl diphosphate = (2E,6E,10E,14E)-geranylfarnesyl diphosphate + 2 diphosphate. It carries out the reaction 3 isopentenyl diphosphate + (2E)-geranyl diphosphate = (2E,6E,10E,14E)-geranylfarnesyl diphosphate + 3 diphosphate. The enzyme catalyses 4 isopentenyl diphosphate + dimethylallyl diphosphate = (2E,6E,10E,14E)-geranylfarnesyl diphosphate + 4 diphosphate. Its pathway is secondary metabolite biosynthesis; terpenoid biosynthesis. It functions in the pathway isoprenoid biosynthesis. In terms of biological role, involved in the biosynthesis of leucosceptrane sesterterpenoids natural products, which are playing defensive roles toward herbivorus insects (e.g. Spodoptera exigua). Catalyzes the condensation of isopentenyl pyrophosphate (IDP) with the allylic pyrophosphates to yield geranylfarnesyl diphosphate (GFDP), the C(25) prenyl diphosphate precursor to all sesterterpenoids. Geranylgeranyl diphosphate (GGPP) is the preferred substrate, however dimethylallyl diphosphate (DMADP), farnesyl diphosphate (FDP) and geranyl diphosphate (GDP) can also be used as allylic substrate. This chain is Geranylfarnesyl diphosphate synthase, chloroplastic, found in Leucosceptrum canum (Hairy white-wand).